Consider the following 430-residue polypeptide: Asparagine--tRNA ligase (430 aa).

Belongs to the class-II aminoacyl-tRNA synthetase family. As to quaternary structure, homodimer.

The protein localises to the cytoplasm. The enzyme catalyses tRNA(Asn) + L-asparagine + ATP = L-asparaginyl-tRNA(Asn) + AMP + diphosphate + H(+). This Bacillus licheniformis (strain ATCC 14580 / DSM 13 / JCM 2505 / CCUG 7422 / NBRC 12200 / NCIMB 9375 / NCTC 10341 / NRRL NRS-1264 / Gibson 46) protein is Asparagine--tRNA ligase.